A 160-amino-acid chain; its full sequence is CXXC motif containing zinc binding protein (160 aa).

Residues Cys-33, Cys-36, Cys-67, and Cys-70 each coordinate Zn(2+).

The protein belongs to the UPF0587 family.

This chain is CXXC motif containing zinc binding protein (czib), found in Xenopus laevis (African clawed frog).